Consider the following 461-residue polypeptide: Ornithine decarboxylase (461 aa).

An N6-(pyridoxal phosphate)lysine modification is found at Lys-69. Pyridoxal 5'-phosphate contacts are provided by residues Ser-200, Gly-237, and 274 to 277; that span reads EPGR. The residue at position 303 (Ser-303) is a Phosphoserine; by CK2. A substrate-binding site is contributed by 331–332; that stretch reads YD. Cys-360 acts as the Proton donor; shared with dimeric partner in catalysis. Cys-360 is modified (S-nitrosocysteine). A substrate-binding site is contributed by Asp-361. Pyridoxal 5'-phosphate is bound at residue Tyr-389.

The protein belongs to the Orn/Lys/Arg decarboxylase class-II family. Homodimer. Only the dimer is catalytically active, as the active sites are constructed of residues from both monomers. Does not form a heterodimer with AZIN2. Pyridoxal 5'-phosphate serves as cofactor. In terms of tissue distribution, expressed during testis development in the outer part of the seminiferous tubules.

It carries out the reaction L-ornithine + H(+) = putrescine + CO2. Its pathway is amine and polyamine biosynthesis; putrescine biosynthesis via L-ornithine pathway; putrescine from L-ornithine: step 1/1. Inhibited by antizymes (AZs) OAZ1, OAZ2 and OAZ3 in response to polyamine levels. AZs inhibit the assembly of the functional homodimer by binding to ODC monomers. Additionally, OAZ1 targets ODC monomers for ubiquitin-independent proteolytic destruction by the 26S proteasome. In terms of biological role, catalyzes the first and rate-limiting step of polyamine biosynthesis that converts ornithine into putrescine, which is the precursor for the polyamines, spermidine and spermine. Polyamines are essential for cell proliferation and are implicated in cellular processes, ranging from DNA replication to apoptosis. The sequence is that of Ornithine decarboxylase (Odc1) from Mus musculus (Mouse).